Reading from the N-terminus, the 338-residue chain is Secretory carrier-associated membrane protein 1 (338 aa).

The tract at residues 1 to 63 (MSDFDSNPFA…PNVPSTQPAI (63 aa)) is disordered. Ser-2 is subject to N-acetylserine. The residue at position 2 (Ser-2) is a Phosphoserine. Topologically, residues 2-155 (SDFDSNPFAD…QKTVKIMYYL (154 aa)) are cytoplasmic. Phosphothreonine is present on Thr-45. Residues 156-176 (WMFHAVTLFLNIFGCLAWFCV) traverse the membrane as a helical segment. At 177–181 (DPSRG) the chain is on the lumenal side. The helical transmembrane segment at 182–202 (VDFGLSILWFLLFTPCSFVCW) threads the bilayer. Residues 203–217 (YRPLYGAFRSDSSFR) are Cytoplasmic-facing. The chain crosses the membrane as a helical span at residues 218 to 238 (FFVFFFVYICQFAVHVLQAAG). Over 239–261 (FHNWGNCGWISSLTGLNQSIPVG) the chain is Lumenal. A helical membrane pass occupies residues 262–282 (IMMIIIAALFTASAVISLVMF). Topologically, residues 283 to 338 (KKVHGLYRTTGASFEKAQQEFATGVMSNKTVQTAAANAASTAATSAAQNAFKGNQI) are cytoplasmic.

The protein belongs to the SCAMP family. Interacts with SYNRG, ITSN1 and SLC9A7.

Its subcellular location is the golgi apparatus. It is found in the trans-Golgi network membrane. It localises to the recycling endosome membrane. In terms of biological role, functions in post-Golgi recycling pathways. Acts as a recycling carrier to the cell surface. The protein is Secretory carrier-associated membrane protein 1 (SCAMP1) of Sus scrofa (Pig).